A 178-amino-acid chain; its full sequence is 6,7-dimethyl-8-ribityllumazine synthase (178 aa).

5-amino-6-(D-ribitylamino)uracil contacts are provided by residues Y27, 58-60, and 82-84; these read SLE and CVI. Residue 87-88 coordinates (2S)-2-hydroxy-3-oxobutyl phosphate; it reads AT. H90 serves as the catalytic Proton donor. N114 serves as a coordination point for 5-amino-6-(D-ribitylamino)uracil. R128 lines the (2S)-2-hydroxy-3-oxobutyl phosphate pocket.

The protein belongs to the DMRL synthase family.

It carries out the reaction (2S)-2-hydroxy-3-oxobutyl phosphate + 5-amino-6-(D-ribitylamino)uracil = 6,7-dimethyl-8-(1-D-ribityl)lumazine + phosphate + 2 H2O + H(+). It functions in the pathway cofactor biosynthesis; riboflavin biosynthesis; riboflavin from 2-hydroxy-3-oxobutyl phosphate and 5-amino-6-(D-ribitylamino)uracil: step 1/2. Functionally, catalyzes the formation of 6,7-dimethyl-8-ribityllumazine by condensation of 5-amino-6-(D-ribitylamino)uracil with 3,4-dihydroxy-2-butanone 4-phosphate. This is the penultimate step in the biosynthesis of riboflavin. In Jannaschia sp. (strain CCS1), this protein is 6,7-dimethyl-8-ribityllumazine synthase.